The following is a 211-amino-acid chain: Small ribosomal subunit protein uS3 (211 aa).

The region spanning 38-106 (LRNFLKKRLY…EIYLNIQEVR (69 aa)) is the KH type-2 domain.

The protein belongs to the universal ribosomal protein uS3 family. In terms of assembly, part of the 30S ribosomal subunit. Forms a tight complex with proteins S10 and S14.

Its function is as follows. Binds the lower part of the 30S subunit head. Binds mRNA in the 70S ribosome, positioning it for translation. The polypeptide is Small ribosomal subunit protein uS3 (Geobacter sulfurreducens (strain ATCC 51573 / DSM 12127 / PCA)).